Consider the following 181-residue polypeptide: TATA-box-binding protein (181 aa).

Repeat copies occupy residues 7 to 83 and 98 to 173.

It belongs to the TBP family.

Functionally, general factor that plays a role in the activation of archaeal genes transcribed by RNA polymerase. Binds specifically to the TATA box promoter element which lies close to the position of transcription initiation. In Methanococcus maripaludis (strain DSM 14266 / JCM 13030 / NBRC 101832 / S2 / LL), this protein is TATA-box-binding protein.